Reading from the N-terminus, the 276-residue chain is 2,3,4,5-tetrahydropyridine-2,6-dicarboxylate N-succinyltransferase (276 aa).

2 residues coordinate substrate: R104 and D141.

It belongs to the transferase hexapeptide repeat family. As to quaternary structure, homotrimer.

Its subcellular location is the cytoplasm. It carries out the reaction (S)-2,3,4,5-tetrahydrodipicolinate + succinyl-CoA + H2O = (S)-2-succinylamino-6-oxoheptanedioate + CoA. Its pathway is amino-acid biosynthesis; L-lysine biosynthesis via DAP pathway; LL-2,6-diaminopimelate from (S)-tetrahydrodipicolinate (succinylase route): step 1/3. This chain is 2,3,4,5-tetrahydropyridine-2,6-dicarboxylate N-succinyltransferase, found in Legionella pneumophila (strain Paris).